The primary structure comprises 410 residues: Arginine biosynthesis bifunctional protein ArgJ (410 aa).

Residues Thr-160, Lys-186, Thr-197, Glu-283, Asn-405, and Thr-410 each coordinate substrate. Thr-197 acts as the Nucleophile in catalysis.

It belongs to the ArgJ family. Heterotetramer of two alpha and two beta chains.

It localises to the cytoplasm. It carries out the reaction N(2)-acetyl-L-ornithine + L-glutamate = N-acetyl-L-glutamate + L-ornithine. The catalysed reaction is L-glutamate + acetyl-CoA = N-acetyl-L-glutamate + CoA + H(+). Its pathway is amino-acid biosynthesis; L-arginine biosynthesis; L-ornithine and N-acetyl-L-glutamate from L-glutamate and N(2)-acetyl-L-ornithine (cyclic): step 1/1. It participates in amino-acid biosynthesis; L-arginine biosynthesis; N(2)-acetyl-L-ornithine from L-glutamate: step 1/4. Competitively inhibited by L-ornithine. Catalyzes two activities which are involved in the cyclic version of arginine biosynthesis: the synthesis of N-acetylglutamate from glutamate and acetyl-CoA as the acetyl donor, and of ornithine by transacetylation between N(2)-acetylornithine and glutamate. The polypeptide is Arginine biosynthesis bifunctional protein ArgJ (Geobacillus stearothermophilus (Bacillus stearothermophilus)).